The sequence spans 353 residues: N-terminal EF-hand calcium-binding protein 3 (353 aa).

The region spanning 27–62 (AGHALFQDVFRRADKNDDGKLSFEEFQNYFADGVLS) is the EF-hand domain. Positions 40, 42, 44, 46, and 51 each coordinate Ca(2+). The segment at 172 to 181 (IKAQSRPCGS) is required for interaction with APBA3. Low complexity predominate over residues 193-203 (SWSPSWSPGSS). Residues 193–213 (SWSPSWSPGSSDTGRSSEAEQ) form a disordered region. Polar residues predominate over residues 204 to 213 (DTGRSSEAEQ). The 90-residue stretch at 253–342 (LVAQRQVQVA…QAPDTLTTVF (90 aa)) folds into the ABM domain.

Interacts with the N-terminal domain of APBA2. Interacts with NEK2. Interacts with APBA3; APBA3 seems to mediate the interaction between NECAB3 and HIF1AN. In terms of processing, phosphorylated by NEK2. Widely expressed, with highest levels in the brain.

The protein localises to the golgi apparatus. Its function is as follows. Inhibits the interaction of APBA2 with amyloid-beta precursor protein (APP), and hence allows formation of amyloid-beta. May enhance the activity of HIF1A and thus promote glycolysis under normoxic conditions; the function requires its ABM domain and may implicate the stabilization of the interaction between HIF1AN and APBA3. This is N-terminal EF-hand calcium-binding protein 3 (Necab3) from Mus musculus (Mouse).